Consider the following 518-residue polypeptide: ATP synthase subunit alpha (518 aa).

169 to 176 (GDRQTGKT) contributes to the ATP binding site.

Belongs to the ATPase alpha/beta chains family. In terms of assembly, F-type ATPases have 2 components, CF(1) - the catalytic core - and CF(0) - the membrane proton channel. CF(1) has five subunits: alpha(3), beta(3), gamma(1), delta(1), epsilon(1). CF(0) has three main subunits: a(1), b(2) and c(9-12). The alpha and beta chains form an alternating ring which encloses part of the gamma chain. CF(1) is attached to CF(0) by a central stalk formed by the gamma and epsilon chains, while a peripheral stalk is formed by the delta and b chains.

It is found in the cell membrane. It carries out the reaction ATP + H2O + 4 H(+)(in) = ADP + phosphate + 5 H(+)(out). Its function is as follows. Produces ATP from ADP in the presence of a proton gradient across the membrane. The alpha chain is a regulatory subunit. This is ATP synthase subunit alpha from Mycoplasma pneumoniae (strain ATCC 29342 / M129 / Subtype 1) (Mycoplasmoides pneumoniae).